We begin with the raw amino-acid sequence, 418 residues long: Dihydrolipoyllysine-residue acetyltransferase component of pyruvate dehydrogenase complex (418 aa).

The region spanning 2-78 (PIKLLMPALS…PVNSLIAVLI (77 aa)) is the Lipoyl-binding domain. At Lys43 the chain carries N6-lipoyllysine. Positions 133–170 (FASPLAKRLAKIQNVRIEEIKGSGPHGRIIKQDVLSHK) constitute a Peripheral subunit-binding (PSBD) domain. His388 is a catalytic residue.

It belongs to the 2-oxoacid dehydrogenase family. Forms a 24-polypeptide structural core with octahedral symmetry. It depends on (R)-lipoate as a cofactor.

It catalyses the reaction N(6)-[(R)-dihydrolipoyl]-L-lysyl-[protein] + acetyl-CoA = N(6)-[(R)-S(8)-acetyldihydrolipoyl]-L-lysyl-[protein] + CoA. The pyruvate dehydrogenase complex catalyzes the overall conversion of pyruvate to acetyl-CoA and CO(2). It contains multiple copies of three enzymatic components: pyruvate dehydrogenase (E1), dihydrolipoamide acetyltransferase (E2) and lipoamide dehydrogenase (E3). The chain is Dihydrolipoyllysine-residue acetyltransferase component of pyruvate dehydrogenase complex (pdhC) from Rickettsia bellii (strain RML369-C).